Reading from the N-terminus, the 668-residue chain is DNA ligase (668 aa).

Residues 34 to 38 (DAEYD), 83 to 84 (SL), and Glu113 each bind NAD(+). Lys115 (N6-AMP-lysine intermediate) is an active-site residue. Residues Arg136, Glu170, Lys286, and Lys310 each contribute to the NAD(+) site. Zn(2+)-binding residues include Cys404, Cys407, Cys422, and Cys427. Positions 590–668 (ESDSYFAGKT…EVKMLEELKK (79 aa)) constitute a BRCT domain.

This sequence belongs to the NAD-dependent DNA ligase family. LigA subfamily. Mg(2+) serves as cofactor. Mn(2+) is required as a cofactor.

The catalysed reaction is NAD(+) + (deoxyribonucleotide)n-3'-hydroxyl + 5'-phospho-(deoxyribonucleotide)m = (deoxyribonucleotide)n+m + AMP + beta-nicotinamide D-nucleotide.. DNA ligase that catalyzes the formation of phosphodiester linkages between 5'-phosphoryl and 3'-hydroxyl groups in double-stranded DNA using NAD as a coenzyme and as the energy source for the reaction. It is essential for DNA replication and repair of damaged DNA. This is DNA ligase from Bacillus pumilus (strain SAFR-032).